The following is a 376-amino-acid chain: Arf-GAP with dual PH domain-containing protein 2 (376 aa).

An Arf-GAP domain is found at Lys9 to Pro130. The segment at Cys25 to Cys48 adopts a C4-type zinc-finger fold. 2 consecutive PH domains span residues Pro131–Leu232 and Asn254–Ser360.

Expressed in many tissues, with highest levels in fat, heart and skeletal muscle. Also detected in kidney, liver and lung.

It localises to the cytoplasm. It is found in the cell membrane. GTPase-activating protein for the ADP ribosylation factor family (Potential). Binds phosphatidylinositol 4,5-bisphosphate, phosphatidylinositol 3,4,5-trisphosphate (PtdInsP3) and inositol 1,3,4,5-tetrakisphosphate (InsP4). Binding of phosphatidylinositol 3,5-bisphosphate and phosphatidylinositol 3,4-bisphosphate occurs at a much lower affinity. Possesses a stoichiometry of two binding sites for InsP4 with identical affinity. The sequence is that of Arf-GAP with dual PH domain-containing protein 2 (Adap2) from Rattus norvegicus (Rat).